Here is a 98-residue protein sequence, read N- to C-terminus: Large ribosomal subunit protein bL28 (98 aa).

It belongs to the bacterial ribosomal protein bL28 family.

The chain is Large ribosomal subunit protein bL28 from Chelativorans sp. (strain BNC1).